A 279-amino-acid polypeptide reads, in one-letter code: Bifunctional protein FolD (279 aa).

Residues 162–164 (GRS), Ser187, and Ile228 each bind NADP(+).

This sequence belongs to the tetrahydrofolate dehydrogenase/cyclohydrolase family. Homodimer.

The catalysed reaction is (6R)-5,10-methylene-5,6,7,8-tetrahydrofolate + NADP(+) = (6R)-5,10-methenyltetrahydrofolate + NADPH. It carries out the reaction (6R)-5,10-methenyltetrahydrofolate + H2O = (6R)-10-formyltetrahydrofolate + H(+). It participates in one-carbon metabolism; tetrahydrofolate interconversion. Its function is as follows. Catalyzes the oxidation of 5,10-methylenetetrahydrofolate to 5,10-methenyltetrahydrofolate and then the hydrolysis of 5,10-methenyltetrahydrofolate to 10-formyltetrahydrofolate. The chain is Bifunctional protein FolD from Acidiphilium cryptum (strain JF-5).